The chain runs to 131 residues: Small ribosomal subunit protein uS8 (131 aa).

Belongs to the universal ribosomal protein uS8 family. In terms of assembly, part of the 30S ribosomal subunit. Contacts proteins S5 and S12.

In terms of biological role, one of the primary rRNA binding proteins, it binds directly to 16S rRNA central domain where it helps coordinate assembly of the platform of the 30S subunit. The protein is Small ribosomal subunit protein uS8 of Chlorobium phaeobacteroides (strain DSM 266 / SMG 266 / 2430).